A 499-amino-acid chain; its full sequence is Protein nucleotidyltransferase YdiU (499 aa).

Gly-95, Gly-97, Arg-98, Lys-117, Asp-129, Gly-130, Arg-180, and Arg-187 together coordinate ATP. Asp-256 serves as the catalytic Proton acceptor. Asn-257 and Asp-266 together coordinate Mg(2+). Asp-266 contributes to the ATP binding site.

This sequence belongs to the SELO family. The cofactor is Mg(2+). Requires Mn(2+) as cofactor.

It catalyses the reaction L-seryl-[protein] + ATP = 3-O-(5'-adenylyl)-L-seryl-[protein] + diphosphate. It carries out the reaction L-threonyl-[protein] + ATP = 3-O-(5'-adenylyl)-L-threonyl-[protein] + diphosphate. The enzyme catalyses L-tyrosyl-[protein] + ATP = O-(5'-adenylyl)-L-tyrosyl-[protein] + diphosphate. The catalysed reaction is L-histidyl-[protein] + UTP = N(tele)-(5'-uridylyl)-L-histidyl-[protein] + diphosphate. It catalyses the reaction L-seryl-[protein] + UTP = O-(5'-uridylyl)-L-seryl-[protein] + diphosphate. It carries out the reaction L-tyrosyl-[protein] + UTP = O-(5'-uridylyl)-L-tyrosyl-[protein] + diphosphate. Functionally, nucleotidyltransferase involved in the post-translational modification of proteins. It can catalyze the addition of adenosine monophosphate (AMP) or uridine monophosphate (UMP) to a protein, resulting in modifications known as AMPylation and UMPylation. This is Protein nucleotidyltransferase YdiU from Dechloromonas aromatica (strain RCB).